We begin with the raw amino-acid sequence, 628 residues long: 1-deoxy-D-xylulose-5-phosphate synthase (628 aa).

Thiamine diphosphate is bound by residues histidine 72 and 113–115; that span reads GHS. Residue aspartate 144 coordinates Mg(2+). Thiamine diphosphate-binding positions include 145–146, asparagine 173, tyrosine 284, and glutamate 367; that span reads GA. Residue asparagine 173 coordinates Mg(2+).

It belongs to the transketolase family. DXPS subfamily. In terms of assembly, homodimer. Mg(2+) is required as a cofactor. Thiamine diphosphate serves as cofactor.

It catalyses the reaction D-glyceraldehyde 3-phosphate + pyruvate + H(+) = 1-deoxy-D-xylulose 5-phosphate + CO2. The protein operates within metabolic intermediate biosynthesis; 1-deoxy-D-xylulose 5-phosphate biosynthesis; 1-deoxy-D-xylulose 5-phosphate from D-glyceraldehyde 3-phosphate and pyruvate: step 1/1. Functionally, catalyzes the acyloin condensation reaction between C atoms 2 and 3 of pyruvate and glyceraldehyde 3-phosphate to yield 1-deoxy-D-xylulose-5-phosphate (DXP). The protein is 1-deoxy-D-xylulose-5-phosphate synthase of Exiguobacterium sibiricum (strain DSM 17290 / CCUG 55495 / CIP 109462 / JCM 13490 / 255-15).